Here is a 506-residue protein sequence, read N- to C-terminus: Dipeptide and tripeptide permease A (506 aa).

The Cytoplasmic portion of the chain corresponds to 1 to 36 (MSTANNNSEHPESVSLNAFKQPKAFYLIFSIELWER). Residues 37-57 (FGYYGLQGIMAVYLVKMLGLS) traverse the membrane as a helical segment. Over 58–61 (EADS) the chain is Periplasmic. Residues 62–82 (ITLFSSFSALVYGFVAIGGWL) traverse the membrane as a helical segment. Over 83-91 (GDKVLGSKR) the chain is Cytoplasmic. Transmembrane regions (helical) follow at residues 92-112 (VIVL…YSGH) and 113-133 (EIFW…LFKA). At 134 to 155 (NPSSLLSTCYEKDDPRLDGAFT) the chain is on the cytoplasmic side. A helical membrane pass occupies residues 156–176 (MYYMSVNIGSFLSMLATPWLA). Residues 177–180 (AKYG) lie on the Periplasmic side of the membrane. The helical transmembrane segment at 181–201 (WSVAFSLSVVGMLITLVNFMV) threads the bilayer. Over 202–222 (CHKWVKQHGSKPDFKPLQVKK) the chain is Cytoplasmic. The chain crosses the membrane as a helical span at residues 223–243 (LLMVLVGVVALVALSSWLLHN). The Periplasmic portion of the chain corresponds to 244-248 (QIIAR). Residues 249–269 (WALAIVSIGIVIVFAKETFAL) form a helical membrane-spanning segment. Topologically, residues 270-276 (HGAARRK) are cytoplasmic. The chain crosses the membrane as a helical span at residues 277 to 297 (MIVAFLLMLEAVVFFVLYSQM). Residues 298 to 322 (PTSLNFFAIHNVEHNILGLAFEPEQ) lie on the Periplasmic side of the membrane. The chain crosses the membrane as a helical span at residues 323 to 343 (YQALNPFWIMLASPILAALYN). The Cytoplasmic portion of the chain corresponds to 344-354 (KMGDRLPMPHK). The helical transmembrane segment at 355 to 375 (FAFGMILCSGAFLVLPWGASF) threads the bilayer. Topologically, residues 376-385 (ANEQGIVSVN) are periplasmic. Residues 386-406 (WLILSYALQSIGELMISGLGL) form a helical membrane-spanning segment. The Cytoplasmic segment spans residues 407 to 416 (AMVAQLVPQR). A helical membrane pass occupies residues 417 to 437 (LMGFIMGSWFLTTAAAALIAG). Residues 438–461 (KVAGLTAVPGDVNDAHASLAIYSH) lie on the Periplasmic side of the membrane. Residues 462–482 (VFMQIGIATAVIAILMMLTAP) traverse the membrane as a helical segment. The Cytoplasmic portion of the chain corresponds to 483 to 506 (KLHRMTLDTAEDTEKKAQAAAITN).

The protein belongs to the major facilitator superfamily. Proton-dependent oligopeptide transporter (POT/PTR) (TC 2.A.17) family. DtpA subfamily.

Its subcellular location is the cell inner membrane. Functionally, proton-dependent permease that transports di- and tripeptides. The sequence is that of Dipeptide and tripeptide permease A from Serratia proteamaculans (strain 568).